Here is a 302-residue protein sequence, read N- to C-terminus: Sulfate adenylyltransferase subunit 2 2 (302 aa).

Belongs to the PAPS reductase family. CysD subfamily. In terms of assembly, heterodimer composed of CysD, the smaller subunit, and CysN.

The catalysed reaction is sulfate + ATP + H(+) = adenosine 5'-phosphosulfate + diphosphate. It participates in sulfur metabolism; hydrogen sulfide biosynthesis; sulfite from sulfate: step 1/3. With CysN forms the ATP sulfurylase (ATPS) that catalyzes the adenylation of sulfate producing adenosine 5'-phosphosulfate (APS) and diphosphate, the first enzymatic step in sulfur assimilation pathway. APS synthesis involves the formation of a high-energy phosphoric-sulfuric acid anhydride bond driven by GTP hydrolysis by CysN coupled to ATP hydrolysis by CysD. This chain is Sulfate adenylyltransferase subunit 2 2, found in Alkalilimnicola ehrlichii (strain ATCC BAA-1101 / DSM 17681 / MLHE-1).